The chain runs to 370 residues: Phosphate-binding protein PstS 3 (370 aa).

An N-terminal signal peptide occupies residues 1-22 (MKLNRFGAAVGVLAAGALVLSA). Residue cysteine 23 is the site of N-palmitoyl cysteine attachment. A lipid anchor (S-diacylglycerol cysteine) is attached at cysteine 23. Residues 56 to 58 (STA), serine 86, aspartate 104, and 191 to 193 (SGT) each bind phosphate.

This sequence belongs to the PstS family. The complex is composed of two ATP-binding proteins (PstB), two transmembrane proteins (PstC and PstA) and a solute-binding protein (PstS).

Its subcellular location is the cell membrane. Part of the ABC transporter complex PstSACB involved in phosphate import. In Mycobacterium bovis (strain ATCC BAA-935 / AF2122/97), this protein is Phosphate-binding protein PstS 3 (pstS3).